Reading from the N-terminus, the 155-residue chain is Transcriptional repressor NrdR (155 aa).

A zinc finger lies at 3–34 (CPNCHQNASRVIDSRPTDEGRTIRRRRECENC). Residues 49–139 (LLVIKNDGTR…IYRQFTDMSS (91 aa)) enclose the ATP-cone domain.

Belongs to the NrdR family. It depends on Zn(2+) as a cofactor.

Its function is as follows. Negatively regulates transcription of bacterial ribonucleotide reductase nrd genes and operons by binding to NrdR-boxes. The polypeptide is Transcriptional repressor NrdR (Lactobacillus delbrueckii subsp. bulgaricus (strain ATCC 11842 / DSM 20081 / BCRC 10696 / JCM 1002 / NBRC 13953 / NCIMB 11778 / NCTC 12712 / WDCM 00102 / Lb 14)).